We begin with the raw amino-acid sequence, 265 residues long: Cytochrome c oxidase subunit 3 (265 aa).

Helical transmembrane passes span 16–36 (PWPISGSLGALATTVGGVMYM), 41–61 (GGATLLSLGLIFLLYTMFVWW), 84–104 (YGSILFIVSEVMFLFAFFWAS), 137–157 (TPILLSSGAAVTWAHHAILAG), 162–182 (AVYALVATVSLAIVFTGFQGM), 200–220 (FYLATGFHGFHVIIGTLFSII), and 245–265 (WHFVDVVRLFLFVSIYWWGGI).

This sequence belongs to the cytochrome c oxidase subunit 3 family. In terms of assembly, component of the cytochrome c oxidase (complex IV, CIV), a multisubunit enzyme composed of a catalytic core of 3 subunits and several supernumerary subunits. The complex exists as a monomer or a dimer and forms supercomplexes (SCs) in the inner mitochondrial membrane with ubiquinol-cytochrome c oxidoreductase (cytochrome b-c1 complex, complex III, CIII).

It localises to the mitochondrion inner membrane. The enzyme catalyses 4 Fe(II)-[cytochrome c] + O2 + 8 H(+)(in) = 4 Fe(III)-[cytochrome c] + 2 H2O + 4 H(+)(out). Functionally, component of the cytochrome c oxidase, the last enzyme in the mitochondrial electron transport chain which drives oxidative phosphorylation. The respiratory chain contains 3 multisubunit complexes succinate dehydrogenase (complex II, CII), ubiquinol-cytochrome c oxidoreductase (cytochrome b-c1 complex, complex III, CIII) and cytochrome c oxidase (complex IV, CIV), that cooperate to transfer electrons derived from NADH and succinate to molecular oxygen, creating an electrochemical gradient over the inner membrane that drives transmembrane transport and the ATP synthase. Cytochrome c oxidase is the component of the respiratory chain that catalyzes the reduction of oxygen to water. Electrons originating from reduced cytochrome c in the intermembrane space (IMS) are transferred via the dinuclear copper A center (CU(A)) of subunit 2 and heme A of subunit 1 to the active site in subunit 1, a binuclear center (BNC) formed by heme A3 and copper B (CU(B)). The BNC reduces molecular oxygen to 2 water molecules using 4 electrons from cytochrome c in the IMS and 4 protons from the mitochondrial matrix. The chain is Cytochrome c oxidase subunit 3 (COX3) from Oenothera berteroana (Bertero's evening primrose).